The primary structure comprises 1295 residues: DNA-directed RNA polymerase subunit beta' (1295 aa).

Cys66, Cys68, Cys81, and Cys84 together coordinate Zn(2+). Asp562, Asp564, and Asp566 together coordinate Mg(2+). Zn(2+) contacts are provided by Cys901, Cys975, Cys982, and Cys985.

This sequence belongs to the RNA polymerase beta' chain family. As to quaternary structure, the RNAP catalytic core consists of 2 alpha, 1 beta, 1 beta' and 1 omega subunit. When a sigma factor is associated with the core the holoenzyme is formed, which can initiate transcription. Mg(2+) is required as a cofactor. The cofactor is Zn(2+).

It carries out the reaction RNA(n) + a ribonucleoside 5'-triphosphate = RNA(n+1) + diphosphate. DNA-dependent RNA polymerase catalyzes the transcription of DNA into RNA using the four ribonucleoside triphosphates as substrates. The sequence is that of DNA-directed RNA polymerase subunit beta' from Rubrobacter xylanophilus (strain DSM 9941 / JCM 11954 / NBRC 16129 / PRD-1).